The chain runs to 177 residues: Large ribosomal subunit protein uL6 (177 aa).

Belongs to the universal ribosomal protein uL6 family. Part of the 50S ribosomal subunit.

Functionally, this protein binds to the 23S rRNA, and is important in its secondary structure. It is located near the subunit interface in the base of the L7/L12 stalk, and near the tRNA binding site of the peptidyltransferase center. The polypeptide is Large ribosomal subunit protein uL6 (Aeromonas hydrophila subsp. hydrophila (strain ATCC 7966 / DSM 30187 / BCRC 13018 / CCUG 14551 / JCM 1027 / KCTC 2358 / NCIMB 9240 / NCTC 8049)).